Reading from the N-terminus, the 432-residue chain is Adenylosuccinate synthetase (432 aa).

GTP-binding positions include 13 to 19 (GDEGKGK) and 41 to 43 (GHT). Residue aspartate 14 is the Proton acceptor of the active site. Residues aspartate 14 and glycine 41 each contribute to the Mg(2+) site. IMP contacts are provided by residues 14–17 (DEGK), 39–42 (NAGH), threonine 130, arginine 144, glutamine 225, threonine 240, and arginine 304. Residue histidine 42 is the Proton donor of the active site. 300-306 (ATTGRKR) provides a ligand contact to substrate. GTP contacts are provided by residues arginine 306, 332–334 (KLD), and 415–417 (STG).

Belongs to the adenylosuccinate synthetase family. In terms of assembly, homodimer. It depends on Mg(2+) as a cofactor.

It is found in the cytoplasm. The enzyme catalyses IMP + L-aspartate + GTP = N(6)-(1,2-dicarboxyethyl)-AMP + GDP + phosphate + 2 H(+). It functions in the pathway purine metabolism; AMP biosynthesis via de novo pathway; AMP from IMP: step 1/2. Functionally, plays an important role in the de novo pathway of purine nucleotide biosynthesis. Catalyzes the first committed step in the biosynthesis of AMP from IMP. The chain is Adenylosuccinate synthetase from Tolumonas auensis (strain DSM 9187 / NBRC 110442 / TA 4).